The following is a 287-amino-acid chain: Small ribosomal subunit biogenesis GTPase RsgA (287 aa).

A CP-type G domain is found at 61–218; sequence ISQLKRPAVA…MVDTPGFSSL (158 aa). Residues 110-113 and 161-169 contribute to the GTP site; these read NKLD and GPSGVGKST. Residues Cys-242, Cys-247, His-249, and Cys-255 each coordinate Zn(2+).

It belongs to the TRAFAC class YlqF/YawG GTPase family. RsgA subfamily. In terms of assembly, monomer. Associates with 30S ribosomal subunit, binds 16S rRNA. Zn(2+) serves as cofactor.

The protein localises to the cytoplasm. In terms of biological role, one of several proteins that assist in the late maturation steps of the functional core of the 30S ribosomal subunit. Helps release RbfA from mature subunits. May play a role in the assembly of ribosomal proteins into the subunit. Circularly permuted GTPase that catalyzes slow GTP hydrolysis, GTPase activity is stimulated by the 30S ribosomal subunit. In Clostridium kluyveri (strain NBRC 12016), this protein is Small ribosomal subunit biogenesis GTPase RsgA.